The following is a 238-amino-acid chain: Acyl-protein thioesterase 1 (238 aa).

Catalysis depends on charge relay system residues Ser120, Asp174, and His219.

The protein belongs to the AB hydrolase superfamily. AB hydrolase 2 family.

The protein resides in the cytoplasm. It localises to the nucleus. It catalyses the reaction S-hexadecanoyl-L-cysteinyl-[protein] + H2O = L-cysteinyl-[protein] + hexadecanoate + H(+). Hydrolyzes fatty acids from S-acylated cysteine residues in proteins with a strong preference for palmitoylated G-alpha proteins over other acyl substrates. Mediates the deacylation of G-alpha proteins such as GPA1 in vivo, but has weak or no activity toward palmitoylated Ras proteins. Has weak lysophospholipase activity in vitro; however such activity may not exist in vivo. This Cryptococcus neoformans var. neoformans serotype D (strain B-3501A) (Filobasidiella neoformans) protein is Acyl-protein thioesterase 1.